The sequence spans 485 residues: uncharacterized protein (485 aa).

Residues 1 to 23 (MRRRVCTVVRAVVCLLSTSLLTT) form the signal peptide. Residue Cys24 is the site of N-palmitoyl cysteine attachment. Cys24 carries S-diacylglycerol cysteine lipidation. Low complexity predominate over residues 308 to 327 (SAASSPAQCPSSPSSSSSSS). The tract at residues 308–331 (SAASSPAQCPSSPSSSSSSSTNAG) is disordered.

This sequence belongs to the TP013X lipoprotein family.

The protein resides in the cell membrane. This is an uncharacterized protein from Treponema pallidum (strain Nichols).